The chain runs to 134 residues: Profilin-1 (134 aa).

The protein belongs to the profilin family. As to quaternary structure, occurs in many kinds of cells as a complex with monomeric actin in a 1:1 ratio.

The protein localises to the cytoplasm. Its subcellular location is the cytoskeleton. Its function is as follows. Binds to actin and affects the structure of the cytoskeleton. At high concentrations, profilin prevents the polymerization of actin, whereas it enhances it at low concentrations. By binding to PIP2, it inhibits the formation of IP3 and DG. The polypeptide is Profilin-1 (PRO1) (Nicotiana tabacum (Common tobacco)).